A 322-amino-acid polypeptide reads, in one-letter code: Ribonucleoside-diphosphate reductase subunit beta nrdF1 (322 aa).

Fe cation contacts are provided by Asp-70, Glu-101, and His-104. Tyr-108 is a catalytic residue. Residues Glu-161, Glu-195, and His-198 each coordinate Fe cation.

Belongs to the ribonucleoside diphosphate reductase small chain family. As to quaternary structure, tetramer of two alpha and two beta subunits. Requires Fe cation as cofactor.

The catalysed reaction is a 2'-deoxyribonucleoside 5'-diphosphate + [thioredoxin]-disulfide + H2O = a ribonucleoside 5'-diphosphate + [thioredoxin]-dithiol. Its function is as follows. Provides the precursors necessary for DNA synthesis. Catalyzes the biosynthesis of deoxyribonucleotides from the corresponding ribonucleotides. This is Ribonucleoside-diphosphate reductase subunit beta nrdF1 (nrdF1) from Mycobacterium tuberculosis (strain CDC 1551 / Oshkosh).